A 350-amino-acid polypeptide reads, in one-letter code: Protein Wnt-8b (350 aa).

The N-terminal stretch at 1–21 is a signal peptide; that stretch reads MFLMKPVCVLLVTCVLHRSHA. Residues cysteine 53 and cysteine 64 are joined by a disulfide bond. Asparagine 102 is a glycosylation site (N-linked (GlcNAc...) asparagine). 10 cysteine pairs are disulfide-bonded: cysteine 103/cysteine 111, cysteine 113/cysteine 131, cysteine 179/cysteine 193, cysteine 181/cysteine 188, cysteine 255/cysteine 293, cysteine 271/cysteine 286, cysteine 290/cysteine 332, cysteine 308/cysteine 323, cysteine 310/cysteine 320, and cysteine 315/cysteine 316. Serine 185 carries the O-palmitoleoyl serine lipid modification. N-linked (GlcNAc...) asparagine glycosylation occurs at asparagine 258.

It belongs to the Wnt family. Post-translationally, palmitoleoylation is required for efficient binding to frizzled receptors. Depalmitoleoylation leads to Wnt signaling pathway inhibition. In terms of processing, proteolytic processing by TIKI1 and TIKI2 promotes oxidation and formation of large disulfide-bond oligomers, leading to inactivation of WNT8B.

The protein resides in the secreted. It localises to the extracellular space. Its subcellular location is the extracellular matrix. Functionally, ligand for members of the frizzled family of seven transmembrane receptors. May play an important role in the development and differentiation of certain forebrain structures, notably the hippocampus. This is Protein Wnt-8b (Wnt8b) from Mus musculus (Mouse).